Reading from the N-terminus, the 173-residue chain is MKFYYHDNDSSVDQCAPHDSGEPVTAEQLEKIGVLAFHYPDVEDVNRLAKERKYTNRDEVTITPEAMGGQENYEKKLKVFYEEHLHEDEEIRYILDGEGYFDVRDKDDRWIRAQLNAGDLLILPSGIYHRFTLSEKNYVHTMRLFQAEPKWVALPRPVDNNPYRQEYVKAISA.

The tract at residues 1–21 (MKFYYHDNDSSVDQCAPHDSG) is disordered. Fe(2+) is bound by residues histidine 84, histidine 86, glutamate 90, and histidine 129. Positions 84, 86, 90, and 129 each coordinate Ni(2+).

This sequence belongs to the acireductone dioxygenase (ARD) family. The cofactor is Fe(2+). It depends on Ni(2+) as a cofactor.

The protein localises to the cytoplasm. Its subcellular location is the nucleus. The enzyme catalyses 1,2-dihydroxy-5-(methylsulfanyl)pent-1-en-3-one + O2 = 4-methylsulfanyl-2-oxobutanoate + formate + 2 H(+). The catalysed reaction is 1,2-dihydroxy-5-(methylsulfanyl)pent-1-en-3-one + O2 = 3-(methylsulfanyl)propanoate + CO + formate + 2 H(+). It functions in the pathway amino-acid biosynthesis; L-methionine biosynthesis via salvage pathway; L-methionine from S-methyl-5-thio-alpha-D-ribose 1-phosphate: step 5/6. Catalyzes 2 different reactions between oxygen and the acireductone 1,2-dihydroxy-3-keto-5-methylthiopentene (DHK-MTPene) depending upon the metal bound in the active site. Fe-containing acireductone dioxygenase (Fe-ARD) produces formate and 2-keto-4-methylthiobutyrate (KMTB), the alpha-ketoacid precursor of methionine in the methionine recycle pathway. Ni-containing acireductone dioxygenase (Ni-ARD) produces methylthiopropionate, carbon monoxide and formate, and does not lie on the methionine recycle pathway. The chain is Acireductone dioxygenase from Yarrowia lipolytica (strain CLIB 122 / E 150) (Yeast).